Reading from the N-terminus, the 707-residue chain is Signal transducer and activator of transcription A (707 aa).

The span at 70–89 (LNQSDQFNLGRSNNLTPRTN) shows a compositional bias: polar residues. A disordered region spans residues 70 to 246 (LNQSDQFNLG…GNPNLSSPQP (177 aa)). Residues 90 to 111 (QLQQLQQQQQQQQQPQQQQQQQ) show a composition bias toward low complexity. The segment covering 112-121 (TYGTQSPIHM) has biased composition (polar residues). Low complexity predominate over residues 142 to 238 (QQSYNNNNSN…QQQQQQQQGN (97 aa)). Positions 242–356 (SSPQPILDTI…IQSILNPQHS (115 aa)) form a coiled coil. The DNA-binding element occupies 443–487 (KFLAGTRKCSVNLKFGVNIRDLDNVTTTVESDASNPFVVITNECQ). An SH2 domain is found at 583–686 (WQEGIIYGYM…FLKLHKDTAL (104 aa)). At Y702 the chain carries Phosphotyrosine.

Belongs to the transcription factor STAT family. Monomer, in the absence of tyrosine phosphorylation. Homodimer, or heterodimer with another family member, when tyrosine phosphorylated. Post-translationally, tyrosine phosphorylated in response to cAMP. Not tyrosine phosphorylated in growing cells. Tyrosine phosphorylation is first detected at the tight mound stage, continues throughout the slug stage and early culmination, and starts to decrease at mid-culmination. Barely detectable in fruiting bodies.

It localises to the cytoplasm. Its subcellular location is the nucleus. In terms of biological role, transcription factor that binds to 5'-TTGAATTGA-3' elements in the promoter region of target genes. Functions as a repressor of the ecmB gene. Regulates the differentiation of prestalk cells during development. The sequence is that of Signal transducer and activator of transcription A (dstA) from Dictyostelium discoideum (Social amoeba).